The following is a 1071-amino-acid chain: ATP-dependent helicase/deoxyribonuclease subunit B (1071 aa).

The protein belongs to the helicase family. AddB/RexB type 2 subfamily. Heterodimer of AddA and RexB. Mg(2+) is required as a cofactor.

Functionally, the heterodimer acts as both an ATP-dependent DNA helicase and an ATP-dependent, dual-direction single-stranded exonuclease. Recognizes the chi site generating a DNA molecule suitable for the initiation of homologous recombination. This subunit has 5' -&gt; 3' nuclease activity but not helicase activity. This is ATP-dependent helicase/deoxyribonuclease subunit B from Streptococcus pyogenes serotype M6 (strain ATCC BAA-946 / MGAS10394).